A 271-amino-acid polypeptide reads, in one-letter code: Potential ATP-binding protein (271 aa).

34-41 (GQPGVGKT) is a binding site for ATP.

In Staphylococcus aureus, this protein is Potential ATP-binding protein.